Reading from the N-terminus, the 361-residue chain is Transmembrane protein 116 (361 aa).

The next 7 membrane-spanning stretches (helical) occupy residues 29-49, 64-84, 103-123, 147-167, 210-230, 261-281, and 295-315; these read WIQM…ILYA, FLLS…GLLF, TLYM…YTGL, LGPV…FVAG, CMAI…IFMG, MVLY…LATM, and VALY…NCLV.

The protein localises to the membrane. This is Transmembrane protein 116 (tmem116) from Danio rerio (Zebrafish).